A 518-amino-acid polypeptide reads, in one-letter code: MELISTINLLTIVLLLFVVSKIWKACWILLLRPLMLSKRFKKQGISGPKYKILYGNLSEIKKMKKEADLCVLDPNSNDIFPRVFPQYHQWMSQYGDTFLFWTGTKPTIYISNHELAKQVLSSKFGFTIIPVKRPEVFILFGKGLSFIQGDDWIRHRRILNPAFSMDRLKAMTQPMGDCTLRIFEEWRKQRRNGEVLIKIEISKEFHKLTADIIATTAFGSSYAEGIELCRSQTELEKYYISSLTNVFIPGTQYLPTPTNLKLWELHKKVKNSIKRIIDSRLKSKCKTYGYGDDLLGVMLTAAKSNEYERKMRMDEIIEECKNFYYAGQGTTSILLTWTTMLLSLHQGWQEKLREEVFNECGKDKIPDTDTFSKLKLMNMVLMESLRLYGPVIKISREATQDMKVGHLEIPKGTSIIIPLLKMHRDKAIWGEDAEQFNPLRFENGISQATIHPNALLPFSIGPRACIAKNFAMVEAKTVLTMILQQFQLSLSPEYKHTPVDHFDLFPQYGLPVMLHPLG.

The helical transmembrane segment at 3 to 23 threads the bilayer; sequence LISTINLLTIVLLLFVVSKIW. Cysteine 465 contacts heme.

It belongs to the cytochrome P450 family. It depends on heme as a cofactor. In terms of tissue distribution, highly expressed in rosette leaves and siliques, and at lower levels in flowers.

Its subcellular location is the membrane. Functionally, plays a role in abscisic acid (ABA) and salt stress response. May regulate the salt stress response independently of well-characterized pathways. Does not function as cytokinin hydroxylase in yeast heterologous system. The protein is Cytochrome P450 709B3 of Arabidopsis thaliana (Mouse-ear cress).